A 55-amino-acid polypeptide reads, in one-letter code: Large ribosomal subunit protein bL33 (55 aa).

This sequence belongs to the bacterial ribosomal protein bL33 family.

The protein is Large ribosomal subunit protein bL33 of Methylobacterium radiotolerans (strain ATCC 27329 / DSM 1819 / JCM 2831 / NBRC 15690 / NCIMB 10815 / 0-1).